The sequence spans 620 residues: Chaperone protein HscA homolog (620 aa).

It belongs to the heat shock protein 70 family.

Functionally, chaperone involved in the maturation of iron-sulfur cluster-containing proteins. Has a low intrinsic ATPase activity which is markedly stimulated by HscB. This chain is Chaperone protein HscA homolog, found in Pseudomonas savastanoi pv. phaseolicola (strain 1448A / Race 6) (Pseudomonas syringae pv. phaseolicola (strain 1448A / Race 6)).